We begin with the raw amino-acid sequence, 157 residues long: MSRNTEELQGISLLGNQKTRYPTGYAPEILEAFDNKHPDNDYFVKFVCPEFTSLCPMTGQPDFATIYIRYIPHIKMVESKSLKLYLFSFRNHGDFHEDCVNIIMKDLIALMDPKYIEVFGEFTPRGGIAIHPFANYGKAGTEFEALARKRLFEHDAQ.

The active-site Thioimide intermediate is the cysteine 55. Catalysis depends on aspartate 62, which acts as the Proton donor. Residues valine 77 to serine 79 and histidine 96 to glutamate 97 contribute to the substrate site.

The protein belongs to the GTP cyclohydrolase I family. QueF type 1 subfamily.

The protein localises to the cytoplasm. It carries out the reaction 7-aminomethyl-7-carbaguanine + 2 NADP(+) = 7-cyano-7-deazaguanine + 2 NADPH + 3 H(+). It participates in tRNA modification; tRNA-queuosine biosynthesis. In terms of biological role, catalyzes the NADPH-dependent reduction of 7-cyano-7-deazaguanine (preQ0) to 7-aminomethyl-7-deazaguanine (preQ1). The chain is NADPH-dependent 7-cyano-7-deazaguanine reductase from Neisseria meningitidis serogroup A / serotype 4A (strain DSM 15465 / Z2491).